The primary structure comprises 217 residues: UPF0319 protein VS_II0881 (217 aa).

The N-terminal stretch at 1–21 is a signal peptide; that stretch reads MKTIQSIALLSAIVAAPSVLA.

The protein belongs to the UPF0319 family.

This Vibrio atlanticus (strain LGP32) (Vibrio splendidus (strain Mel32)) protein is UPF0319 protein VS_II0881.